Reading from the N-terminus, the 292-residue chain is Protease HtpX (292 aa).

2 helical membrane-spanning segments follow: residues 4-24 (IILFLLTNLAVMLTFSLILAV) and 32-52 (IYGLLIMSSLFGFSGSILSLI). His139 serves as a coordination point for Zn(2+). Residue Glu140 is part of the active site. His143 is a binding site for Zn(2+). 2 consecutive transmembrane segments (helical) span residues 150–170 (ITMTLVQGVVNTFVIFISRII) and 193–213 (FLFFLISTFLEIIFGVLASII). Zn(2+) is bound at residue Glu222.

It belongs to the peptidase M48B family. The cofactor is Zn(2+).

It localises to the cell membrane. The chain is Protease HtpX from Buchnera aphidicola subsp. Schizaphis graminum (strain Sg).